A 47-amino-acid polypeptide reads, in one-letter code: Large ribosomal subunit protein bL27c-2 (47 aa).

It belongs to the bacterial ribosomal protein bL27 family.

The protein localises to the plastid. Its subcellular location is the chloroplast. The polypeptide is Large ribosomal subunit protein bL27c-2 (Cyanidium caldarium (Red alga)).